We begin with the raw amino-acid sequence, 511 residues long: Phosphoenolpyruvate carboxylase (511 aa).

Belongs to the PEPCase type 2 family. In terms of assembly, homotetramer. It depends on Mg(2+) as a cofactor.

It catalyses the reaction oxaloacetate + phosphate = phosphoenolpyruvate + hydrogencarbonate. With respect to regulation, allosterically inhibited by L-aspartate and L-malate. PEPC activity is not affected by allosteric activators of E.coli PEPC such as glucose 6-phosphate, fructose 1,6-bisphosphate, and acetyl coenzyme A. Functionally, catalyzes the irreversible beta-carboxylation of phosphoenolpyruvate (PEP) to form oxaloacetate (OAA), a four-carbon dicarboxylic acid source for the tricarboxylic acid cycle. In Saccharolobus solfataricus (strain ATCC 35092 / DSM 1617 / JCM 11322 / P2) (Sulfolobus solfataricus), this protein is Phosphoenolpyruvate carboxylase.